The primary structure comprises 335 residues: Probable cytosolic iron-sulfur protein assembly protein Ciao1 (335 aa).

WD repeat units lie at residues Gly12–Lys51, Gly57–Asn96, Gly101–Cys140, Ser146–Asp185, Ser192–Gly231, Gln250–Glu289, and Ala301–Glu335.

This sequence belongs to the WD repeat CIA1 family.

Essential component of the cytosolic iron-sulfur (Fe/S) protein assembly machinery. Required for the maturation of extramitochondrial Fe/S proteins. The chain is Probable cytosolic iron-sulfur protein assembly protein Ciao1 from Drosophila erecta (Fruit fly).